Here is a 689-residue protein sequence, read N- to C-terminus: Beta-adrenergic receptor kinase 1 (689 aa).

An N-terminal region spans residues 1–190; that stretch reads MADLEAVLAD…ELNIHLTMND (190 aa). One can recognise an RGS domain in the interval 54–175; that stretch reads TFEKIFSQKL…IESEKFTRFC (122 aa). Residues 191–453 enclose the Protein kinase domain; sequence FSVHRIIGRG…AQEVKEDPFF (263 aa). ATP contacts are provided by residues 197-205 and lysine 220; that span reads IGRGGFGEV. Aspartate 317 acts as the Proton acceptor in catalysis. The region spanning 454-521 is the AGC-kinase C-terminal domain; it reads KAVDWQMVLL…TISERWQQEV (68 aa). The PH domain occupies 558–652; sequence DCIMHGYMSK…WKKELRDVYR (95 aa). The disordered stretch occupies residues 665 to 689; the sequence is KNKPRSPVVELSKMPLTQRGSANGL. Serine 670 carries the phosphoserine modification.

The protein belongs to the protein kinase superfamily. AGC Ser/Thr protein kinase family. GPRK subfamily. Interacts with the heterodimer formed by GNB1 and GNG2. Interacts with GIT1. Interacts with, and phosphorylates chemokine-stimulated CCR5. Interacts with ARRB1. Interacts with LPAR1 and LPAR2. Interacts with RALA in response to LPAR1 activation. ADRBK1 and RALA mutually inhibit each other's binding to LPAR1. Interacts with ADRB2.

The protein localises to the cytoplasm. It localises to the cell membrane. Its subcellular location is the postsynapse. It is found in the presynapse. The enzyme catalyses [beta-adrenergic receptor] + ATP = [beta-adrenergic receptor]-phosphate + ADP + H(+). Its activity is regulated as follows. In contrast to other AGC family kinases, the catalytic activity is solely regulated by the binding of substrates and ligands, not by phosphorylation of the kinase domain. Functionally, specifically phosphorylates the agonist-occupied form of the beta-adrenergic and closely related receptors, probably inducing a desensitization of them. Does not act on HTR1B/5-hydroxytryptamine 1B receptor. Key regulator of LPAR1 signaling. Competes with RALA for binding to LPAR1 thus affecting the signaling properties of the receptor. Desensitizes LPAR1 and LPAR2 in a phosphorylation-independent manner. Inhibits relaxation of airway smooth muscle in response to blue light. The chain is Beta-adrenergic receptor kinase 1 from Didelphis virginiana (North American opossum).